Consider the following 104-residue polypeptide: Large ribosomal subunit protein uL23 (104 aa).

Belongs to the universal ribosomal protein uL23 family. In terms of assembly, part of the 50S ribosomal subunit. Contacts protein L29, and trigger factor when it is bound to the ribosome.

Its function is as follows. One of the early assembly proteins it binds 23S rRNA. One of the proteins that surrounds the polypeptide exit tunnel on the outside of the ribosome. Forms the main docking site for trigger factor binding to the ribosome. The sequence is that of Large ribosomal subunit protein uL23 from Ralstonia pickettii (strain 12J).